The following is a 549-amino-acid chain: Glucose-6-phosphate isomerase (549 aa).

The active-site Proton donor is Glu-355. Residues His-387 and Lys-515 contribute to the active site.

The protein belongs to the GPI family.

Its subcellular location is the cytoplasm. It catalyses the reaction alpha-D-glucose 6-phosphate = beta-D-fructose 6-phosphate. It participates in carbohydrate biosynthesis; gluconeogenesis. Its pathway is carbohydrate degradation; glycolysis; D-glyceraldehyde 3-phosphate and glycerone phosphate from D-glucose: step 2/4. Functionally, catalyzes the reversible isomerization of glucose-6-phosphate to fructose-6-phosphate. This Haemophilus influenzae (strain ATCC 51907 / DSM 11121 / KW20 / Rd) protein is Glucose-6-phosphate isomerase.